A 349-amino-acid polypeptide reads, in one-letter code: MSSRNAPSGCVAPSPATAAPPSPTNLRLTVGQSGSESANEPGGEPEERILQDGFWEYGRFYGNWKKGKYNFPIDKEETSRLDILHKYFIVETEDRVTSVPLDKEGSPKIMDLGTGTGIWAFHVVEGYIPNAQIMAVDLNQIQPALIPRGVTTKQFDLEEPSWEPLLRDCDLIHLRLLYGSIRDDLWADTYRKIFEHLAPGGYVEHLEIDWTPQWDGEDHPTHSAIREWSQQFHRAMHRYRRSVKVSSEDTKRMMEAAGFTEFKETKIRCYLNPWSTDRHQREAARWFNLALGLGLEAMSLMPMIDMLHMKQEDVVDLCKRVKAETCVLRYHAYFTLHTWTAKKPASPPQ.

Residues 1–46 are disordered; the sequence is MSSRNAPSGCVAPSPATAAPPSPTNLRLTVGQSGSESANEPGGEPE. Polar residues predominate over residues 25–38; the sequence is NLRLTVGQSGSESA.

Belongs to the methyltransferase superfamily. LaeA methyltransferase family. As to quaternary structure, component of the heterotrimeric velvet complex composed of LAE1, VEL1 and VEL2; VEL1 acting as a bridging protein between LAE1 and VEL2.

Its subcellular location is the nucleus. The enzyme catalyses L-methionyl-[protein] + S-adenosyl-L-methionine = S-methyl-L-methionyl-[protein] + S-adenosyl-L-homocysteine. Methyltransferase that performs automethylation. No other methyl-accepting substrate has been identified yet. Component of the velvet transcription factor complex that acts as a global regulator for secondary metabolite gene expression. Controls the expression of the gamma-pentyl-pyrone gene clusters. Required for the expression of cellulase. Regulates asexual sporulation (conidiation) by environmental stimuli such as light and/or mechanical injury. Required for oxidative stress tolerance. Also plays a role in defense and parasitism on other fungi. This chain is Secondary metabolism regulator LAE1, found in Hypocrea atroviridis (strain ATCC 20476 / IMI 206040) (Trichoderma atroviride).